We begin with the raw amino-acid sequence, 227 residues long: 2,3-bisphosphoglycerate-dependent phosphoglycerate mutase (227 aa).

Substrate-binding positions include Arg-7 to Asn-14, Thr-20 to Gly-21, Arg-59, Glu-86 to Tyr-89, Lys-97, Arg-113 to Arg-114, and Gly-182 to Asn-183. His-8 acts as the Tele-phosphohistidine intermediate in catalysis. The Proton donor/acceptor role is filled by Glu-86.

The protein belongs to the phosphoglycerate mutase family. BPG-dependent PGAM subfamily. Homodimer.

It catalyses the reaction (2R)-2-phosphoglycerate = (2R)-3-phosphoglycerate. The protein operates within carbohydrate degradation; glycolysis; pyruvate from D-glyceraldehyde 3-phosphate: step 3/5. Its function is as follows. Catalyzes the interconversion of 2-phosphoglycerate and 3-phosphoglycerate. This chain is 2,3-bisphosphoglycerate-dependent phosphoglycerate mutase, found in Neisseria gonorrhoeae (strain ATCC 700825 / FA 1090).